The chain runs to 135 residues: uncharacterized protein (135 aa).

Positions 13 to 129 (QVLIAENSRF…KILEKVNAAI (117 aa)) constitute a Response regulatory domain. D64 carries the 4-aspartylphosphate modification.

This is an uncharacterized protein from Leptospira interrogans serogroup Icterohaemorrhagiae serovar copenhageni (strain Fiocruz L1-130).